The chain runs to 105 residues: Large ribosomal subunit protein eL42z/eL42y (105 aa).

The segment at 28–57 (YKKGKDSLAAQGKRRYDRKQSGYGGQTKPV) is disordered.

It belongs to the eukaryotic ribosomal protein eL42 family.

The protein is Large ribosomal subunit protein eL42z/eL42y (RPL36AA) of Arabidopsis thaliana (Mouse-ear cress).